Reading from the N-terminus, the 108-residue chain is Small ribosomal subunit protein bS16 (108 aa).

The disordered stretch occupies residues 82–108 (ESKFSKNTQTENKKPVSKKTTKKSKDN). Basic residues predominate over residues 96–108 (PVSKKTTKKSKDN).

This sequence belongs to the bacterial ribosomal protein bS16 family.

In Mycoplasma capricolum subsp. capricolum (strain California kid / ATCC 27343 / NCTC 10154), this protein is Small ribosomal subunit protein bS16.